The chain runs to 213 residues: Pyridoxine/pyridoxamine 5'-phosphate oxidase (213 aa).

FMN-binding positions include 60–65, 75–76, Lys82, and Gln104; these read RMVLMK and YS. Lys65 lines the substrate pocket. Substrate-binding residues include Tyr122 and Arg126. FMN contacts are provided by residues 139–140 and Trp184; that span reads QS. 190–192 lines the substrate pocket; it reads RLH. Arg194 lines the FMN pocket.

This sequence belongs to the pyridoxamine 5'-phosphate oxidase family. Homodimer. Requires FMN as cofactor.

The enzyme catalyses pyridoxamine 5'-phosphate + O2 + H2O = pyridoxal 5'-phosphate + H2O2 + NH4(+). The catalysed reaction is pyridoxine 5'-phosphate + O2 = pyridoxal 5'-phosphate + H2O2. Its pathway is cofactor metabolism; pyridoxal 5'-phosphate salvage; pyridoxal 5'-phosphate from pyridoxamine 5'-phosphate: step 1/1. The protein operates within cofactor metabolism; pyridoxal 5'-phosphate salvage; pyridoxal 5'-phosphate from pyridoxine 5'-phosphate: step 1/1. In terms of biological role, catalyzes the oxidation of either pyridoxine 5'-phosphate (PNP) or pyridoxamine 5'-phosphate (PMP) into pyridoxal 5'-phosphate (PLP). The sequence is that of Pyridoxine/pyridoxamine 5'-phosphate oxidase from Rhodopseudomonas palustris (strain BisA53).